The chain runs to 169 residues: MYTSGYANRSSSFSTAVNNTARVATTNTTAGLISEVVYREDQPMMTQLLLLPLLQQLGQQSRWQLWLTPQQKLSREWVQASGLPLSKVMQINQLSPCHTVESMIRALRTGNYSVVIGWLAEELTEEEHAELVNAANEGNAMGFIMRPVSARTHATRQLSGLKIHSNLYH.

A ftsZ binding region spans residues 106–112 (ALRTGNY). The interval 162-169 (KIHSNLYH) is lon protease binding.

The protein belongs to the SulA family. In terms of assembly, interacts with FtsZ. In terms of processing, is rapidly cleaved and degraded by the Lon protease once DNA damage is repaired.

Functionally, component of the SOS system and an inhibitor of cell division. Accumulation of SulA causes rapid cessation of cell division and the appearance of long, non-septate filaments. In the presence of GTP, binds a polymerization-competent form of FtsZ in a 1:1 ratio, thus inhibiting FtsZ polymerization and therefore preventing it from participating in the assembly of the Z ring. This mechanism prevents the premature segregation of damaged DNA to daughter cells during cell division. The sequence is that of Cell division inhibitor SulA from Escherichia fergusonii (strain ATCC 35469 / DSM 13698 / CCUG 18766 / IAM 14443 / JCM 21226 / LMG 7866 / NBRC 102419 / NCTC 12128 / CDC 0568-73).